Reading from the N-terminus, the 141-residue chain is Hemoglobin subunit alpha-2 (141 aa).

Residues 1–141 (VLSPADKNNV…VSTVLTSKYR (141 aa)) form the Globin domain. His58 is an O2 binding site. His87 is a heme b binding site.

It belongs to the globin family. As to quaternary structure, heterotetramer of two alpha chains and two beta chains. In terms of tissue distribution, red blood cells.

Functionally, involved in oxygen transport from the lung to the various peripheral tissues. The chain is Hemoglobin subunit alpha-2 from Varecia variegata (Black-and-white ruffed lemur).